A 163-amino-acid chain; its full sequence is Large ribosomal subunit protein uL10 (163 aa).

This sequence belongs to the universal ribosomal protein uL10 family. As to quaternary structure, part of the ribosomal stalk of the 50S ribosomal subunit. The N-terminus interacts with L11 and the large rRNA to form the base of the stalk. The C-terminus forms an elongated spine to which L12 dimers bind in a sequential fashion forming a multimeric L10(L12)X complex.

Its function is as follows. Forms part of the ribosomal stalk, playing a central role in the interaction of the ribosome with GTP-bound translation factors. In Actinobacillus succinogenes (strain ATCC 55618 / DSM 22257 / CCUG 43843 / 130Z), this protein is Large ribosomal subunit protein uL10.